Reading from the N-terminus, the 188-residue chain is Zinc finger protein 428 (188 aa).

Residues 1–162 (MTETREPAET…EEEEEEGTYH (162 aa)) form a disordered region. A compositionally biased stretch (acidic residues) spans 40 to 61 (PDSEEEEDEEEEEEETTDDPEY). Positions 84–94 (RAAQPPAQPCQ) are enriched in low complexity. Position 108 is a phosphothreonine (Thr-108). The span at 116 to 129 (PATAPQEAPAPEGR) shows a compositional bias: low complexity. The span at 138–149 (PPRAGEGRPAGR) shows a compositional bias: basic and acidic residues. The C2H2-type zinc-finger motif lies at 161–183 (YHCTECEDSFDNLGELHGHFMLH).

The sequence is that of Zinc finger protein 428 (ZNF428) from Homo sapiens (Human).